The primary structure comprises 240 residues: UDP-2,3-diacylglucosamine hydrolase (240 aa).

The Mn(2+) site is built by aspartate 8, histidine 10, aspartate 41, asparagine 79, and histidine 114. 79–80 (NR) lines the substrate pocket. Residues aspartate 122, serine 160, asparagine 164, lysine 167, and histidine 195 each contribute to the substrate site. 2 residues coordinate Mn(2+): histidine 195 and histidine 197.

The protein belongs to the LpxH family. Mn(2+) is required as a cofactor.

The protein resides in the cell inner membrane. The enzyme catalyses UDP-2-N,3-O-bis[(3R)-3-hydroxytetradecanoyl]-alpha-D-glucosamine + H2O = 2-N,3-O-bis[(3R)-3-hydroxytetradecanoyl]-alpha-D-glucosaminyl 1-phosphate + UMP + 2 H(+). It participates in glycolipid biosynthesis; lipid IV(A) biosynthesis; lipid IV(A) from (3R)-3-hydroxytetradecanoyl-[acyl-carrier-protein] and UDP-N-acetyl-alpha-D-glucosamine: step 4/6. In terms of biological role, hydrolyzes the pyrophosphate bond of UDP-2,3-diacylglucosamine to yield 2,3-diacylglucosamine 1-phosphate (lipid X) and UMP by catalyzing the attack of water at the alpha-P atom. Involved in the biosynthesis of lipid A, a phosphorylated glycolipid that anchors the lipopolysaccharide to the outer membrane of the cell. This is UDP-2,3-diacylglucosamine hydrolase from Escherichia coli O6:H1 (strain CFT073 / ATCC 700928 / UPEC).